The sequence spans 753 residues: Transcription factor SOX-30 (753 aa).

2 disordered regions span residues 1 to 45 (MERA…TLSA) and 137 to 161 (AKKQKLGPSLDQSVGPRGAVETGPR). The segment covering 7 to 23 (EPPPQPRPLRPAPPPLP) has biased composition (pro residues). Residues 337–405 (VKRPMNAFMV…KHREEFPGWV (69 aa)) constitute a DNA-binding region (HMG box). Disordered regions lie at residues 514–575 (TGPS…SPCP) and 726–753 (PTSTPSSIQQVNVTDSDEEEEEKVLRDL). Polar residues-rich tracts occupy residues 531–563 (TVKQPTPVSLESANRISSSASTAHARFATSTIQ) and 726–739 (PTSTPSSIQQVNVT).

In terms of assembly, interacts with CTNNB1, competitively inhibiting CTNNB1-TCF7L2/TCF4 interaction.

Its subcellular location is the nucleus. It is found in the cytoplasm. In terms of biological role, acts both as a transcriptional activator and a repressor. Binds to the DNA sequence 5'-ACAAT-3' and shows a preference for guanine residues surrounding this core motif. Binds to its own promoter and activates its own transcription. Required to activate the expression of postmeiotic genes involved in spermiogenesis. Binds to the promoter region of CTNNB1 and represses its transcription which leads to inhibition of Wnt signaling. Also inhibits Wnt signaling by binding to the CTNNB1 protein, preventing interaction of CTNNB1 with TCF7L2/TCF4. In Homo sapiens (Human), this protein is Transcription factor SOX-30 (SOX30).